Reading from the N-terminus, the 380-residue chain is Kappa-type opioid receptor (380 aa).

Residues 1-57 (MDSPIQIFRGEPGPTCAPSACLPPNSSAWFPGWAEPDSNGSAGSEDAQLEPAHISPA) are Extracellular-facing. N-linked (GlcNAc...) asparagine glycosylation is found at Asn25 and Asn39. Residues 58-85 (IPVIITAVYSVVFVVGLVGNSLVMFVII) form a helical membrane-spanning segment. Over 86 to 95 (RYTKMKTATN) the chain is Cytoplasmic. Residues 96-119 (IYIFNLALADALVTTTMPFQSTVY) form a helical membrane-spanning segment. Residues 120 to 132 (LMNSWPFGDVLCK) are Extracellular-facing. Cys131 and Cys210 are joined by a disulfide. The chain crosses the membrane as a helical span at residues 133–154 (IVISIDYYNMFTSIFTLTMMSV). Residues 155-173 (DRYIAVCHPVKALDFRTPL) lie on the Cytoplasmic side of the membrane. The helical transmembrane segment at 174–196 (KAKIINICIWLLSSSVGISAIVL) threads the bilayer. The Extracellular portion of the chain corresponds to 197–222 (GGTKVREDVDVIECSLQFPDDDYSWW). Residues 223–247 (DLFMKICVFIFAFVIPVLIIIVCYT) traverse the membrane as a helical segment. Residues 248-274 (LMILRLKSVRLLSGSREKDRNLRRITR) are Cytoplasmic-facing. A helical transmembrane segment spans residues 275–296 (LVLVVVAVFVVCWTPIHIFILV). The Extracellular portion of the chain corresponds to 297–311 (EALGSTSHSTAALSS). The helical transmembrane segment at 312-333 (YYFCIALGYTNSSLNPILYAFL) threads the bilayer. Over 334-380 (DENFKRCFRDFCFPLKMRMERQSTSRVRNTVQDPAYLRDIDGMNKPV) the chain is Cytoplasmic. Residue Cys345 is the site of S-palmitoyl cysteine attachment.

The protein belongs to the G-protein coupled receptor 1 family. Interacts with NHERF1. Interacts with GABARAPL1. As to expression, detected in brain and placenta.

It is found in the cell membrane. Functionally, G-protein coupled opioid receptor that functions as a receptor for endogenous alpha-neoendorphins and dynorphins, but has low affinity for beta-endorphins. Also functions as a receptor for various synthetic opioids and for the psychoactive diterpene salvinorin A. Ligand binding causes a conformation change that triggers signaling via guanine nucleotide-binding proteins (G proteins) and modulates the activity of down-stream effectors, such as adenylate cyclase. Signaling leads to the inhibition of adenylate cyclase activity. Inhibits neurotransmitter release by reducing calcium ion currents and increasing potassium ion conductance. Plays a role in the perception of pain. Plays a role in mediating reduced physical activity upon treatment with synthetic opioids. Plays a role in the regulation of salivation in response to synthetic opioids. May play a role in arousal and regulation of autonomic and neuroendocrine functions. The polypeptide is Kappa-type opioid receptor (OPRK1) (Homo sapiens (Human)).